Reading from the N-terminus, the 443-residue chain is D-alanyl-D-alanine carboxypeptidase DacA (443 aa).

The signal sequence occupies residues 1-31; it reads MNIKKCKQLLMSLVVLTLAVTCLAPMSKAKA. Residue Ser67 is the Acyl-ester intermediate of the active site. The active-site Proton acceptor is the Lys70. Residue Ser131 is part of the active site. Residue Lys258 participates in substrate binding.

This sequence belongs to the peptidase S11 family.

The protein localises to the secreted. It localises to the cell wall. Its subcellular location is the cell membrane. It is found in the membrane raft. The catalysed reaction is Preferential cleavage: (Ac)2-L-Lys-D-Ala-|-D-Ala. Also transpeptidation of peptidyl-alanyl moieties that are N-acyl substituents of D-alanine.. It participates in cell wall biogenesis; peptidoglycan biosynthesis. Removes C-terminal D-alanyl residues from sugar-peptide cell wall precursors. The sequence is that of D-alanyl-D-alanine carboxypeptidase DacA (dacA) from Bacillus subtilis (strain 168).